The following is a 575-amino-acid chain: DNA mismatch repair protein MutL (575 aa).

This sequence belongs to the DNA mismatch repair MutL/HexB family.

In terms of biological role, this protein is involved in the repair of mismatches in DNA. It is required for dam-dependent methyl-directed DNA mismatch repair. May act as a 'molecular matchmaker', a protein that promotes the formation of a stable complex between two or more DNA-binding proteins in an ATP-dependent manner without itself being part of a final effector complex. The sequence is that of DNA mismatch repair protein MutL from Dictyoglomus thermophilum (strain ATCC 35947 / DSM 3960 / H-6-12).